The chain runs to 155 residues: Endoribonuclease YbeY (155 aa).

Positions 114, 118, and 124 each coordinate Zn(2+).

This sequence belongs to the endoribonuclease YbeY family. Zn(2+) is required as a cofactor.

It localises to the cytoplasm. Its function is as follows. Single strand-specific metallo-endoribonuclease involved in late-stage 70S ribosome quality control and in maturation of the 3' terminus of the 16S rRNA. The chain is Endoribonuclease YbeY from Photorhabdus laumondii subsp. laumondii (strain DSM 15139 / CIP 105565 / TT01) (Photorhabdus luminescens subsp. laumondii).